Here is a 310-residue protein sequence, read N- to C-terminus: Ribose-phosphate pyrophosphokinase (310 aa).

Residues 34–36 (DQE) and 93–94 (RQ) each bind ATP. Positions 127 and 167 each coordinate Mg(2+). The active site involves K190. D-ribose 5-phosphate contacts are provided by residues R192, D216, and 220–224 (DSGGT).

Belongs to the ribose-phosphate pyrophosphokinase family. Class I subfamily. In terms of assembly, homohexamer. Mg(2+) serves as cofactor.

The protein resides in the cytoplasm. The catalysed reaction is D-ribose 5-phosphate + ATP = 5-phospho-alpha-D-ribose 1-diphosphate + AMP + H(+). It functions in the pathway metabolic intermediate biosynthesis; 5-phospho-alpha-D-ribose 1-diphosphate biosynthesis; 5-phospho-alpha-D-ribose 1-diphosphate from D-ribose 5-phosphate (route I): step 1/1. Involved in the biosynthesis of the central metabolite phospho-alpha-D-ribosyl-1-pyrophosphate (PRPP) via the transfer of pyrophosphoryl group from ATP to 1-hydroxyl of ribose-5-phosphate (Rib-5-P). The polypeptide is Ribose-phosphate pyrophosphokinase (Brucella melitensis biotype 1 (strain ATCC 23456 / CCUG 17765 / NCTC 10094 / 16M)).